A 341-amino-acid chain; its full sequence is Glyceraldehyde-3-phosphate dehydrogenase (341 aa).

NAD(+) contacts are provided by residues 11 to 12 (TI) and glycine 109. 138-140 (SCN) contributes to the D-glyceraldehyde 3-phosphate binding site. The active-site Nucleophile is the cysteine 139. Residue arginine 167 coordinates NAD(+). D-glyceraldehyde 3-phosphate is bound by residues threonine 169 and 192–193 (HA). Glutamine 299 is a binding site for NAD(+).

Belongs to the glyceraldehyde-3-phosphate dehydrogenase family. In terms of assembly, homotetramer.

The protein resides in the cytoplasm. The enzyme catalyses D-glyceraldehyde 3-phosphate + phosphate + NADP(+) = (2R)-3-phospho-glyceroyl phosphate + NADPH + H(+). It catalyses the reaction D-glyceraldehyde 3-phosphate + phosphate + NAD(+) = (2R)-3-phospho-glyceroyl phosphate + NADH + H(+). Its pathway is carbohydrate degradation; glycolysis; pyruvate from D-glyceraldehyde 3-phosphate: step 1/5. The protein is Glyceraldehyde-3-phosphate dehydrogenase of Picrophilus torridus (strain ATCC 700027 / DSM 9790 / JCM 10055 / NBRC 100828 / KAW 2/3).